Here is a 931-residue protein sequence, read N- to C-terminus: Scaffold attachment factor B1 (931 aa).

A compositionally biased stretch (low complexity) spans 1 to 24 (MAETLSGLGDSGAASAAAVSSAAS). The interval 1–35 (MAETLSGLGDSGAASAAAVSSAASETGTRRLSDLR) is disordered. Ala-2 carries the N-acetylalanine modification. Phosphoserine occurs at positions 24 and 55. Residues 31–65 (LSDLRVIDLRAELRKRNLTSSGNKSVLMERLKKAI) enclose the SAP domain. The segment at 64-121 (AIEEEGGNPDEIEVISEGNKKMPKRPSKGKKPEDEGVEDNGLEENSGDGQEDVETSLE) is disordered. Residues 67 to 77 (EEGGNPDEIEV) are compositionally biased toward acidic residues. Ser-79 is subject to Phosphoserine. Positions 98 to 118 (EGVEDNGLEENSGDGQEDVET) are enriched in acidic residues. Residues Lys-171 and Lys-185 each participate in a glycyl lysine isopeptide (Lys-Gly) (interchain with G-Cter in SUMO2) cross-link. A phosphoserine mark is found at Ser-194, Ser-196, and Ser-208. Disordered regions lie at residues 205-304 (EEAS…TRCQ) and 316-430 (KREP…GRNF). The segment covering 224 to 233 (CKSEPVKEEG) has biased composition (basic and acidic residues). A Glycyl lysine isopeptide (Lys-Gly) (interchain with G-Cter in SUMO) cross-link involves residue Lys-230. Residues 267–287 (EEEEEEEEEEEQEEEQEEEGD) are compositionally biased toward acidic residues. A Glycyl lysine isopeptide (Lys-Gly) (interchain with G-Cter in SUMO) cross-link involves residue Lys-316. The segment covering 341–356 (EQSSTAAQLPETTSQE) has biased composition (polar residues). The span at 368-380 (EPRDSKDDVKKFA) shows a compositional bias: basic and acidic residues. A Glycyl lysine isopeptide (Lys-Gly) (interchain with G-Cter in SUMO2) cross-link involves residue Lys-403. Residues Ser-405 and Ser-406 each carry the phosphoserine modification. Basic and acidic residues predominate over residues 412 to 423 (DTKRLSREEKGR). A Glycyl lysine isopeptide (Lys-Gly) (interchain with G-Cter in SUMO2) cross-link involves residue Lys-414. The RRM domain maps to 428–506 (RNFWVSGLSS…KMISVEKAKS (79 aa)). Ser-437 bears the Phosphoserine mark. Composition is skewed to basic and acidic residues over residues 500–573 (SVEK…ERSR) and 581–592 (GTERTVVMDKSK). 4 disordered regions span residues 500–663 (SVEK…WERE), 691–720 (RLER…LRRQ), 759–843 (RYHS…PRRD), and 872–931 (RWQG…QQTQ). Glycyl lysine isopeptide (Lys-Gly) (interchain with G-Cter in SUMO2) cross-links involve residues Lys-505, Lys-536, Lys-565, and Lys-592. The interval 550–816 (TDDGSTEKSK…RHGGPERHGR (267 aa)) is interaction with POLR2A; SFRS1; SFRS9 and SFRS10. Lys-600 participates in a covalent cross-link: Glycyl lysine isopeptide (Lys-Gly) (interchain with G-Cter in SUMO1); alternate. A Glycyl lysine isopeptide (Lys-Gly) (interchain with G-Cter in SUMO2); alternate cross-link involves residue Lys-600. 4 positions are modified to phosphoserine: Ser-602, Ser-604, Ser-623, and Ser-626. The segment covering 603-663 (GSKERASKSQ…QRLQAQWERE (61 aa)) has biased composition (basic and acidic residues). The Nuclear localization signal signature appears at 621 to 638 (KRSVVSFDKVKESRKSRD). An N6-acetyllysine modification is found at Lys-629. The span at 759-820 (RYHSDFSRQD…PERHGRDSRD (62 aa)) shows a compositional bias: basic and acidic residues. Arg-834 carries the omega-N-methylarginine modification. Residues Arg-892, Arg-898, Arg-908, and Arg-914 each carry the asymmetric dimethylarginine modification.

In terms of assembly, monomer and homodimer. Interacts with KHDRBS3. Interacts with CLK2. Interacts with POLR2A, ASF/SRSF1, SRp30c/SRFS9 and TRA2B/SFRS10. Interacts with SRPK1 and inhibits its activity. Interacts with RBMX. Interacts with FUS. Interacts with ZBED4. Phosphorylated by CDC-like kinase 2 (CLK2). In terms of processing, sumoylated by PIAS1 with SUMO1 and SUMO2/3, desumoylated by SENP1. Sumoylation is required for transcriptional repressor activity.

The protein localises to the nucleus. Binds to scaffold/matrix attachment region (S/MAR) DNA and forms a molecular assembly point to allow the formation of a 'transcriptosomal' complex (consisting of SR proteins and RNA polymerase II) coupling transcription and RNA processing. Functions as an estrogen receptor corepressor and can also bind to the HSP27 promoter and decrease its transcription. Thereby acts as a negative regulator of cell proliferation. When associated with RBMX, binds to and stimulates transcription from the SREBF1 promoter. The chain is Scaffold attachment factor B1 (Safb) from Rattus norvegicus (Rat).